Here is a 166-residue protein sequence, read N- to C-terminus: Lipoprotein signal peptidase (166 aa).

A run of 4 helical transmembrane segments spans residues 11–31 (LNLV…LYIL), 42–62 (IYIT…AFGL), 69–89 (VIYN…IFMM), and 99–119 (FFAL…VYTA). Catalysis depends on residues D122 and D140. A helical transmembrane segment spans residues 133-153 (WFVFNVADIFITIGVFCLILV).

Belongs to the peptidase A8 family.

The protein localises to the cell inner membrane. It carries out the reaction Release of signal peptides from bacterial membrane prolipoproteins. Hydrolyzes -Xaa-Yaa-Zaa-|-(S,diacylglyceryl)Cys-, in which Xaa is hydrophobic (preferably Leu), and Yaa (Ala or Ser) and Zaa (Gly or Ala) have small, neutral side chains.. It participates in protein modification; lipoprotein biosynthesis (signal peptide cleavage). This protein specifically catalyzes the removal of signal peptides from prolipoproteins. The polypeptide is Lipoprotein signal peptidase (Pelagibacter ubique (strain HTCC1062)).